The chain runs to 147 residues: Diuretic hormone 45 (147 aa).

The signal sequence occupies residues 1 to 26 (MMWWAVWCAAMVAGSVFTAAAPPTDS). A propeptide spanning residues 27–84 (IDLMQMDPSLADDESLGFAMQSLSGRYAAAPWLYLLADVSHDPQRMAEFSQSSGRARP) is cleaved from the precursor. V131 carries the post-translational modification Valine amide. A propeptide spanning residues 135–147 (GAWGEPASYLYNN) is cleaved from the precursor.

The protein belongs to the sauvagine/corticotropin-releasing factor/urotensin I family.

It localises to the secreted. Regulation of fluid secretion. The sequence is that of Diuretic hormone 45 (dh45) from Bombyx mori (Silk moth).